We begin with the raw amino-acid sequence, 195 residues long: Peptidyl-tRNA hydrolase (195 aa).

Tyr-18 provides a ligand contact to tRNA. His-23 acts as the Proton acceptor in catalysis. TRNA is bound by residues Phe-69, Asn-71, and Asn-117.

Belongs to the PTH family. Monomer.

The protein localises to the cytoplasm. The catalysed reaction is an N-acyl-L-alpha-aminoacyl-tRNA + H2O = an N-acyl-L-amino acid + a tRNA + H(+). Its function is as follows. Hydrolyzes ribosome-free peptidyl-tRNAs (with 1 or more amino acids incorporated), which drop off the ribosome during protein synthesis, or as a result of ribosome stalling. In terms of biological role, catalyzes the release of premature peptidyl moieties from peptidyl-tRNA molecules trapped in stalled 50S ribosomal subunits, and thus maintains levels of free tRNAs and 50S ribosomes. In Hahella chejuensis (strain KCTC 2396), this protein is Peptidyl-tRNA hydrolase.